A 729-amino-acid chain; its full sequence is Receptor-like protein 2 (729 aa).

The N-terminal stretch at M1 to A44 is a signal peptide. The N-cap stretch occupies residues V45–I82. Over V45 to T707 the chain is Extracellular. Residues N60 and N71 are each glycosylated (N-linked (GlcNAc...) asparagine). 20 LRR repeats span residues D89–I113, H114–T137, D139–N163, F168–Q193, T195–S219, S220–C244, L245–L268, S269–L292, R293–L316, S317–C340, K342–Q364, L365–C389, S391–L413, E414–Q437, C439–S464, F468–L492, N493–T515, L516–L540, A542–L560, and N561–R584. N-linked (GlcNAc...) asparagine glycans are attached at residues N145 and N163. Residues N202 and N205 are each glycosylated (N-linked (GlcNAc...) asparagine). N256, N267, N288, N315, N330, and N339 each carry an N-linked (GlcNAc...) asparagine glycan. N375 carries an N-linked (GlcNAc...) asparagine glycan. The N-linked (GlcNAc...) asparagine glycan is linked to N428. N564, N587, N611, N622, N635, N657, and N705 each carry an N-linked (GlcNAc...) asparagine glycan. LRR repeat units follow at residues L599–L623, T624–L647, and F649–T672. The tract at residues L690–T707 is C-cap/acidic domain. A helical transmembrane segment spans residues F708–A728. Position 729 (W729) is a topological domain, cytoplasmic.

It belongs to the RLP family.

The protein localises to the cell membrane. Its function is as follows. Involved in the perception of CLV3 and CLV3-like peptides, that act as extracellular signals regulating meristems maintenance. The sequence is that of Receptor-like protein 2 from Arabidopsis thaliana (Mouse-ear cress).